The chain runs to 153 residues: Large ribosomal subunit protein bL9 (153 aa).

The protein belongs to the bacterial ribosomal protein bL9 family.

Functionally, binds to the 23S rRNA. The chain is Large ribosomal subunit protein bL9 from Gloeobacter violaceus (strain ATCC 29082 / PCC 7421).